Here is a 51-residue protein sequence, read N- to C-terminus: MKMKKCPKCGRYTLKDFCSECNEKSVTVKPPRFSPVDKYGKYRRALKKAKM.

The protein belongs to the NOP10 family.

Functionally, involved in ribosome biogenesis; more specifically in 18S rRNA pseudouridylation and in cleavage of pre-rRNA. The protein is Ribosome biogenesis protein Nop10 of Methanococcus maripaludis (strain C5 / ATCC BAA-1333).